The following is a 156-amino-acid chain: ATP synthase subunit b (156 aa).

A helical membrane pass occupies residues 11-31 (LIAFALFVWFCMKFVWPPIIN).

This sequence belongs to the ATPase B chain family. In terms of assembly, F-type ATPases have 2 components, F(1) - the catalytic core - and F(0) - the membrane proton channel. F(1) has five subunits: alpha(3), beta(3), gamma(1), delta(1), epsilon(1). F(0) has three main subunits: a(1), b(2) and c(10-14). The alpha and beta chains form an alternating ring which encloses part of the gamma chain. F(1) is attached to F(0) by a central stalk formed by the gamma and epsilon chains, while a peripheral stalk is formed by the delta and b chains.

Its subcellular location is the cell inner membrane. In terms of biological role, f(1)F(0) ATP synthase produces ATP from ADP in the presence of a proton or sodium gradient. F-type ATPases consist of two structural domains, F(1) containing the extramembraneous catalytic core and F(0) containing the membrane proton channel, linked together by a central stalk and a peripheral stalk. During catalysis, ATP synthesis in the catalytic domain of F(1) is coupled via a rotary mechanism of the central stalk subunits to proton translocation. Functionally, component of the F(0) channel, it forms part of the peripheral stalk, linking F(1) to F(0). The chain is ATP synthase subunit b from Haemophilus influenzae (strain 86-028NP).